The chain runs to 502 residues: Cytochrome P450 3A5 (502 aa).

Cys-441 serves as a coordination point for heme.

Belongs to the cytochrome P450 family. Heme serves as cofactor.

It localises to the endoplasmic reticulum membrane. Its subcellular location is the microsome membrane. The enzyme catalyses an organic molecule + reduced [NADPH--hemoprotein reductase] + O2 = an alcohol + oxidized [NADPH--hemoprotein reductase] + H2O + H(+). The catalysed reaction is 17beta-estradiol + reduced [NADPH--hemoprotein reductase] + O2 = 2-hydroxy-17beta-estradiol + oxidized [NADPH--hemoprotein reductase] + H2O + H(+). It catalyses the reaction 17beta-estradiol + reduced [NADPH--hemoprotein reductase] + O2 = 4-hydroxy-17beta-estradiol + oxidized [NADPH--hemoprotein reductase] + H2O + H(+). It carries out the reaction estrone + reduced [NADPH--hemoprotein reductase] + O2 = 2-hydroxyestrone + oxidized [NADPH--hemoprotein reductase] + H2O + H(+). The enzyme catalyses estrone + reduced [NADPH--hemoprotein reductase] + O2 = 4-hydroxyestrone + oxidized [NADPH--hemoprotein reductase] + H2O + H(+). The catalysed reaction is testosterone + reduced [NADPH--hemoprotein reductase] + O2 = 6beta,17beta-dihydroxyandrost-4-en-3-one + oxidized [NADPH--hemoprotein reductase] + H2O + H(+). It catalyses the reaction androst-4-ene-3,17-dione + reduced [NADPH--hemoprotein reductase] + O2 = 6beta-hydroxyandrost-4-ene-3,17-dione + oxidized [NADPH--hemoprotein reductase] + H2O + H(+). It carries out the reaction progesterone + reduced [NADPH--hemoprotein reductase] + O2 = 6beta-hydroxyprogesterone + oxidized [NADPH--hemoprotein reductase] + H2O + H(+). The enzyme catalyses all-trans-retinol + reduced [NADPH--hemoprotein reductase] + O2 = all-trans-retinal + oxidized [NADPH--hemoprotein reductase] + 2 H2O + H(+). The catalysed reaction is all-trans-retinoate + reduced [NADPH--hemoprotein reductase] + O2 = all-trans-4-hydroxyretinoate + oxidized [NADPH--hemoprotein reductase] + H2O + H(+). It participates in steroid hormone biosynthesis. It functions in the pathway cofactor metabolism; retinol metabolism. Its function is as follows. A cytochrome P450 monooxygenase involved in the metabolism of steroid hormones and vitamins. Mechanistically, uses molecular oxygen inserting one oxygen atom into a substrate, and reducing the second into a water molecule, with two electrons provided by NADPH via cytochrome P450 reductase (NADPH--hemoprotein reductase). Catalyzes the hydroxylation of carbon-hydrogen bonds. Exhibits high catalytic activity for the formation of catechol estrogens from 17beta-estradiol (E2) and estrone (E1), namely 2-hydroxy E1 and E2. Catalyzes 6beta-hydroxylation of the steroid hormones testosterone, progesterone, and androstenedione. Catalyzes the oxidative conversion of all-trans-retinol to all-trans-retinal, a rate-limiting step for the biosynthesis of all-trans-retinoic acid (atRA). Further metabolizes all trans-retinoic acid (atRA) to 4-hydroxyretinoate and may play a role in hepatic atRA clearance. Also involved in the oxidative metabolism of xenobiotics, including calcium channel blocking drug nifedipine and immunosuppressive drug cyclosporine. The chain is Cytochrome P450 3A5 from Homo sapiens (Human).